Reading from the N-terminus, the 260-residue chain is Pyridoxine 5'-phosphate synthase (260 aa).

The 3-amino-2-oxopropyl phosphate site is built by N10 and R21. Residue H46 is the Proton acceptor of the active site. The 1-deoxy-D-xylulose 5-phosphate site is built by R48 and H53. The active-site Proton acceptor is the E76. T113 is a 1-deoxy-D-xylulose 5-phosphate binding site. H204 serves as the catalytic Proton donor. 3-amino-2-oxopropyl phosphate-binding positions include D205 and 227–228 (GH).

This sequence belongs to the PNP synthase family. In terms of assembly, homooctamer; tetramer of dimers.

It is found in the cytoplasm. It carries out the reaction 3-amino-2-oxopropyl phosphate + 1-deoxy-D-xylulose 5-phosphate = pyridoxine 5'-phosphate + phosphate + 2 H2O + H(+). It participates in cofactor biosynthesis; pyridoxine 5'-phosphate biosynthesis; pyridoxine 5'-phosphate from D-erythrose 4-phosphate: step 5/5. Catalyzes the complicated ring closure reaction between the two acyclic compounds 1-deoxy-D-xylulose-5-phosphate (DXP) and 3-amino-2-oxopropyl phosphate (1-amino-acetone-3-phosphate or AAP) to form pyridoxine 5'-phosphate (PNP) and inorganic phosphate. This chain is Pyridoxine 5'-phosphate synthase, found in Xylella fastidiosa (strain M12).